Reading from the N-terminus, the 211-residue chain is Protein-methionine-sulfoxide reductase heme-binding subunit MsrQ (211 aa).

4 helical membrane-spanning segments follow: residues 17–37 (LAGL…GLGA), 82–102 (LWCF…ELGV), 116–136 (PYLT…FTST), and 153–173 (FVYL…KIIS).

The protein belongs to the MsrQ family. In terms of assembly, heterodimer of a catalytic subunit (MsrP) and a heme-binding subunit (MsrQ). The cofactor is FMN. Requires heme b as cofactor.

The protein resides in the cell inner membrane. In terms of biological role, part of the MsrPQ system that repairs oxidized periplasmic proteins containing methionine sulfoxide residues (Met-O), using respiratory chain electrons. Thus protects these proteins from oxidative-stress damage caused by reactive species of oxygen and chlorine generated by the host defense mechanisms. MsrPQ is essential for the maintenance of envelope integrity under bleach stress, rescuing a wide series of structurally unrelated periplasmic proteins from methionine oxidation, including the primary periplasmic chaperone SurA and the lipoprotein Pal. MsrQ provides electrons for reduction to the reductase catalytic subunit MsrP, using the quinone pool of the respiratory chain. The protein is Protein-methionine-sulfoxide reductase heme-binding subunit MsrQ of Shigella sonnei (strain Ss046).